Consider the following 267-residue polypeptide: MKIGTQATSLAVLHNQESHAPQAPIAVRPEPAHAIPEIPLDLAIRPRTRGIHPFLAMTLGDKGCASSSGVSLEDDSHTQVSLSDFSVASRDVNHNNICAGLSTEWLVMSSDGDAESRMDHLDYNGEGQSRGSERHQVYNDALRAALSNDDEAPFFTASTAVIEDAGFSLRREPKTVHASGGSAQLGQTVAHDVAQSGRKHLLSLRFANVQGHAIACSCEGSQFKLFDPNLGEFQSSRSAAPQLIKGLIDHYNSLNYDVACVNEFRVS.

A lipid anchor (N-myristoyl glycine; by host) is attached at Gly-63. Residues Cys-98, His-212, and Asp-227 contribute to the active site.

The protein belongs to the peptidase C58 family. In infected plant cells, the 28 kDa product interacts with PBS1. Autocleaved. This function is essential for myristoylation in infected plant cell and for eliciting the plant hypersensitive response. Post-translationally, myristoylation of 28 kDa product in infected plant cells; it mediates the localization to membranes.

Its subcellular location is the secreted. It is found in the host membrane. Cysteine protease avirulence protein, which is essential during infection of plant cells from cultivar-specific of beans and Arabidopsis thaliana. The autocleavage of the protein is required for virulence function. May act by affecting the plant defense system. In plants lacking R3 or RPS5 resistance genes, it probably impairs the plant defense system and leads to the bacteria multiplication. In contrast, in plants containing the R3 or RPS5 protein, it is unable to induce disease symptoms, explaining its avirulence name. The 7 kDa product is required for the type-III translocation from Pseudomonas strains to the plant, but are partially dispensable for effector recognition following in planta expression. In infected plants, it acts by cleaving the PBS1 protein, which leads to resistance or disease, depending on the presence or absence of RPS5, respectively. Targets the Arabidopsis kinases PBS1, BIK1, PBL1, PBL2, PBL3, PBL5, PBL7, PBL9 and PBL11 for cleavage in vitro. Can block recognition of AvrB avirulence factor by plant cells by cleaving Arabidopsis RIPK kinase and suppressing Arabidopsis RPM1 activation. Cannot block AvrRpm1-induced activation of RPM1. In Pseudomonas savastanoi pv. phaseolicola (Pseudomonas syringae pv. phaseolicola), this protein is Cysteine protease avirulence protein AvrPphB (avrPph3).